Reading from the N-terminus, the 595-residue chain is Epsin-2 (595 aa).

6 residues coordinate a 1,2-diacyl-sn-glycero-3-phospho-(1D-myo-inositol-4,5-bisphosphate): R8, K11, R25, N30, R63, and H73. Residues 12 to 144 enclose the ENTH domain; the sequence is NIVNNYSEAE…KDEERLKVER (133 aa). Over residues 164 to 183 the composition is skewed to polar residues; that stretch reads NQITFGRGSSQPNLSTSYSE. 4 disordered regions span residues 164-254, 267-289, 305-396, and 423-469; these read NQIT…RLRR, SRRDTVKVPKKKEAKACCKPGSH, SGPV…KPSS, and TSKK…PESF. Omega-N-methylarginine is present on R170. Residues S173, S192, and S195 each carry the phosphoserine modification. Composition is skewed to polar residues over residues 197 to 216 and 235 to 245; these read HGSTSPRVSSELEQARPQTS and EQSSESVQTAR. UIM domains lie at 218–237 and 255–274; these read EEELQLQLALAMSREVAEQS and GDDLRLQMALEESRRDTVKV. A compositionally biased stretch (polar residues) spans 306–337; that stretch reads GPVTQKTEPWSAGASANQTNPWGGTVAPSNIT. 4 repeat units span residues 313 to 315, 325 to 327, 338 to 340, and 352 to 354. Residues 313–389 are 6 X 3 AA repeats of [DE]-P-W; sequence EPWSAGASAN…SNAGKTTDAW (77 aa). Positions 358 to 367 are enriched in polar residues; that stretch reads TTASTQSVPK. Residues 370–372 form repeat 5; that stretch reads DPW. Over residues 374–384 the composition is skewed to polar residues; sequence ASQQPASNAGK. The stretch at 387 to 389 is repeat 6; that stretch reads DAW. S443 is subject to Phosphoserine. A compositionally biased stretch (low complexity) spans 449–460; sequence SQSLTSASSKPS. T465 bears the Phosphothreonine mark. Repeat copies occupy residues 494–496 and 508–510. Residues 494-593 form a 3 X 3 AA repeats of N-P-F region; it reads NPFLAPGAAA…AQSTGTTNPF (100 aa). S526 carries the phosphoserine modification. Copy 3 of the repeat occupies 591-593; the sequence is NPF.

The protein belongs to the epsin family. As to quaternary structure, binds EPS15, AP-2 and clathrin. Interacts with UBQLN2. Interacts with ITSN1. In terms of processing, ubiquitinated.

It is found in the cytoplasm. Functionally, plays a role in the formation of clathrin-coated invaginations and endocytosis. This is Epsin-2 (Epn2) from Mus musculus (Mouse).